The chain runs to 49 residues: Large ribosomal subunit protein bL33A (49 aa).

Belongs to the bacterial ribosomal protein bL33 family.

This Bacillus pumilus (strain SAFR-032) protein is Large ribosomal subunit protein bL33A.